Reading from the N-terminus, the 399-residue chain is LEM domain-containing protein Bocksbeutel (399 aa).

The LEM domain maps to 4–48 (LSYLDTLGNKELLAKCLEHGLPGVPVTDSTRSVIIRRLKAKITGV). 3 disordered regions span residues 49 to 103 (PLNK…EQSR), 119 to 141 (SVQTTTTVSDMSSQSEDDDSYMV), and 233 to 287 (NSTS…SNLA). Polar residues-rich tracts occupy residues 68-77 (HGSQVTTPTS) and 89-99 (GRTSSNNNKIS). The segment covering 233-256 (NSTSYEESSTYNPKLSPISPRNTF) has biased composition (polar residues). The helical transmembrane segment at 377 to 397 (FYLILVVSVMLATMVYVVLTP) threads the bilayer.

It localises to the nucleus inner membrane. Its subcellular location is the cytoplasm. It is found in the nucleus. The protein resides in the nucleoplasm. The protein localises to the endoplasmic reticulum. Inner nuclear membrane protein. May have a role in maintaining the structural integrity of the nuclear lamina. During pupal development, plays essential and redundant functions with the other LEM domain proteins; MAN1 and Ote. Also has a redundant but important role with Ote in larval development. The chain is LEM domain-containing protein Bocksbeutel from Drosophila melanogaster (Fruit fly).